The following is a 1269-amino-acid chain: Protein cramped-like (1269 aa).

The span at 1–12 (MTVKLGDGGSGE) shows a compositional bias: gly residues. Residues 1–165 (MTVKLGDGGS…GKKVRRQWES (165 aa)) form a disordered region. Composition is skewed to basic and acidic residues over residues 13-24 (DGLKKLGKRAAD) and 43-52 (SGTKRDEKTP). Residues 59–74 (PPAPPGAPQAPSPPQG) are compositionally biased toward pro residues. Residues 105-123 (GNAGGSGPRGKGAEGGGSS) are compositionally biased toward gly residues. Residues 124–147 (SGNVSGVAPAAPAGGSRSSSRNLG) are compositionally biased toward low complexity. Over residues 151–165 (GEKEEGKKVRRQWES) the composition is skewed to basic and acidic residues. Residues 161–224 (RQWESWSTED…FYYRTWHKIT (64 aa)) form the SANT domain. Residue Ser-307 is modified to Phosphoserine. 6 disordered regions span residues 450–541 (IQSG…PGAL), 581–666 (DTRP…EVPA), 757–827 (VRPA…NDSD), 976–1034 (EGLS…DSFQ), 1055–1092 (IPLS…SQGE), and 1115–1157 (VPLS…PSDS). Low complexity predominate over residues 485 to 507 (SSGESSPESAPGEGAALSLSSPD). 2 stretches are compositionally biased toward basic and acidic residues: residues 508 to 518 (APDRPPPRHQD) and 526 to 535 (TPAEGRDSPT). Polar residues-rich tracts occupy residues 757–767 (VRPAQEEQSMT), 774–806 (TVSS…SSGL), and 982–1002 (SPLS…TGTH). Low complexity-rich tracts occupy residues 1055-1070 (IPLS…LSPP) and 1125-1140 (SDSS…SPQP). Ser-1268 bears the Phosphoserine mark.

Belongs to the cramped family.

The protein localises to the nucleus. This Homo sapiens (Human) protein is Protein cramped-like.